The chain runs to 241 residues: Phycocyanobilin:ferredoxin oxidoreductase (241 aa).

Belongs to the HY2 family.

The enzyme catalyses (2R,3Z)-phycocyanobilin + 4 oxidized [2Fe-2S]-[ferredoxin] = biliverdin IXalpha + 4 reduced [2Fe-2S]-[ferredoxin] + 4 H(+). Its function is as follows. Catalyzes the four-electron reduction of biliverdin IX-alpha (2-electron reduction at both the A and D rings); the reaction proceeds via an isolatable 2-electron intermediate, 181,182-dihydrobiliverdin. The protein is Phycocyanobilin:ferredoxin oxidoreductase of Prochlorococcus marinus (strain MIT 9301).